The primary structure comprises 571 residues: Proline--tRNA ligase (571 aa).

The protein belongs to the class-II aminoacyl-tRNA synthetase family. ProS type 1 subfamily. Homodimer.

It is found in the cytoplasm. It carries out the reaction tRNA(Pro) + L-proline + ATP = L-prolyl-tRNA(Pro) + AMP + diphosphate. Its function is as follows. Catalyzes the attachment of proline to tRNA(Pro) in a two-step reaction: proline is first activated by ATP to form Pro-AMP and then transferred to the acceptor end of tRNA(Pro). As ProRS can inadvertently accommodate and process non-cognate amino acids such as alanine and cysteine, to avoid such errors it has two additional distinct editing activities against alanine. One activity is designated as 'pretransfer' editing and involves the tRNA(Pro)-independent hydrolysis of activated Ala-AMP. The other activity is designated 'posttransfer' editing and involves deacylation of mischarged Ala-tRNA(Pro). The misacylated Cys-tRNA(Pro) is not edited by ProRS. The sequence is that of Proline--tRNA ligase from Mannheimia succiniciproducens (strain KCTC 0769BP / MBEL55E).